A 203-amino-acid polypeptide reads, in one-letter code: Outer-membrane lipoprotein LolB (203 aa).

The signal sequence occupies residues 1 to 22 (MPVNLNHTLLLCLLVAASLLSG). Residue cysteine 23 is the site of N-palmitoyl cysteine attachment. The S-diacylglycerol cysteine moiety is linked to residue cysteine 23.

It belongs to the LolB family. As to quaternary structure, monomer.

Its subcellular location is the cell outer membrane. In terms of biological role, plays a critical role in the incorporation of lipoproteins in the outer membrane after they are released by the LolA protein. The protein is Outer-membrane lipoprotein LolB of Shewanella denitrificans (strain OS217 / ATCC BAA-1090 / DSM 15013).